A 228-amino-acid polypeptide reads, in one-letter code: Uracil-DNA glycosylase (228 aa).

Asp-64 serves as the catalytic Proton acceptor.

It belongs to the uracil-DNA glycosylase (UDG) superfamily. UNG family.

The protein localises to the cytoplasm. The enzyme catalyses Hydrolyzes single-stranded DNA or mismatched double-stranded DNA and polynucleotides, releasing free uracil.. In terms of biological role, excises uracil residues from the DNA which can arise as a result of misincorporation of dUMP residues by DNA polymerase or due to deamination of cytosine. The polypeptide is Uracil-DNA glycosylase (Yersinia pseudotuberculosis serotype O:1b (strain IP 31758)).